Here is a 530-residue protein sequence, read N- to C-terminus: Phosphoenolpyruvate carboxykinase (ATP) (530 aa).

Substrate is bound by residues arginine 58, tyrosine 195, and lysine 201. ATP is bound by residues lysine 201, histidine 220, and 236–244; that span reads GLSGTGKTT. Residues lysine 201 and histidine 220 each contribute to the Mn(2+) site. Aspartate 257 lines the Mn(2+) pocket. Residues glutamate 285, arginine 321, 440 to 441, and threonine 446 each bind ATP; that span reads RI. Arginine 321 contacts substrate.

Belongs to the phosphoenolpyruvate carboxykinase (ATP) family. The cofactor is Mn(2+).

It is found in the cytoplasm. The enzyme catalyses oxaloacetate + ATP = phosphoenolpyruvate + ADP + CO2. It participates in carbohydrate biosynthesis; gluconeogenesis. In terms of biological role, involved in the gluconeogenesis. Catalyzes the conversion of oxaloacetate (OAA) to phosphoenolpyruvate (PEP) through direct phosphoryl transfer between the nucleoside triphosphate and OAA. The sequence is that of Phosphoenolpyruvate carboxykinase (ATP) from Staphylococcus aureus (strain Mu3 / ATCC 700698).